The sequence spans 316 residues: Tyrosine recombinase XerD (316 aa).

The region spanning 4 to 97 (AALQTQLQGY…AVRGLHRFAV (94 aa)) is the Core-binding (CB) domain. The region spanning 118–309 (RLPKSLTVDE…TVQALREVWA (192 aa)) is the Tyr recombinase domain. Active-site residues include arginine 162, lysine 186, histidine 261, arginine 264, and histidine 287. The active-site O-(3'-phospho-DNA)-tyrosine intermediate is tyrosine 296.

This sequence belongs to the 'phage' integrase family. XerD subfamily. Forms a cyclic heterotetrameric complex composed of two molecules of XerC and two molecules of XerD.

It is found in the cytoplasm. Site-specific tyrosine recombinase, which acts by catalyzing the cutting and rejoining of the recombining DNA molecules. The XerC-XerD complex is essential to convert dimers of the bacterial chromosome into monomers to permit their segregation at cell division. It also contributes to the segregational stability of plasmids. The protein is Tyrosine recombinase XerD of Mycobacterium leprae (strain TN).